The chain runs to 199 residues: Recombination protein RecR (199 aa).

The C4-type zinc-finger motif lies at 57 to 72; it reads CEICGNLDTKSICHIC. Residues 80-175 enclose the Toprim domain; that stretch reads STIAIVETVA…KISRLASGIP (96 aa).

This sequence belongs to the RecR family.

May play a role in DNA repair. It seems to be involved in an RecBC-independent recombinational process of DNA repair. It may act with RecF and RecO. The sequence is that of Recombination protein RecR from Rickettsia prowazekii (strain Madrid E).